We begin with the raw amino-acid sequence, 407 residues long: Carbamoyl phosphate synthase small chain (407 aa).

A CPSase region spans residues 1 to 203 (MSQNESGTIA…EPCGEYEGKE (203 aa)). Residues serine 61, glycine 255, and glycine 257 each contribute to the L-glutamine site. The Glutamine amidotransferase type-1 domain occupies 207–405 (TVAAVDLGIK…CELMKNNSKE (199 aa)). Catalysis depends on cysteine 283, which acts as the Nucleophile. L-glutamine contacts are provided by phenylalanine 284, glutamine 287, asparagine 325, glycine 327, and phenylalanine 328. Active-site residues include histidine 378 and glutamate 380.

It belongs to the CarA family. As to quaternary structure, composed of two chains; the small (or glutamine) chain promotes the hydrolysis of glutamine to ammonia, which is used by the large (or ammonia) chain to synthesize carbamoyl phosphate. Tetramer of heterodimers (alpha,beta)4.

It catalyses the reaction hydrogencarbonate + L-glutamine + 2 ATP + H2O = carbamoyl phosphate + L-glutamate + 2 ADP + phosphate + 2 H(+). The enzyme catalyses L-glutamine + H2O = L-glutamate + NH4(+). The protein operates within amino-acid biosynthesis; L-arginine biosynthesis; carbamoyl phosphate from bicarbonate: step 1/1. It participates in pyrimidine metabolism; UMP biosynthesis via de novo pathway; (S)-dihydroorotate from bicarbonate: step 1/3. In terms of biological role, small subunit of the glutamine-dependent carbamoyl phosphate synthetase (CPSase). CPSase catalyzes the formation of carbamoyl phosphate from the ammonia moiety of glutamine, carbonate, and phosphate donated by ATP, constituting the first step of 2 biosynthetic pathways, one leading to arginine and/or urea and the other to pyrimidine nucleotides. The small subunit (glutamine amidotransferase) binds and cleaves glutamine to supply the large subunit with the substrate ammonia. The sequence is that of Carbamoyl phosphate synthase small chain from Bifidobacterium longum (strain DJO10A).